The sequence spans 320 residues: Glycerol-3-phosphate dehydrogenase [NAD(P)+] (320 aa).

4 residues coordinate NADPH: Ser-14, Phe-15, Arg-35, and Lys-109. Sn-glycerol 3-phosphate contacts are provided by Lys-109 and Gly-137. Ala-141 is a binding site for NADPH. Sn-glycerol 3-phosphate-binding residues include Lys-192, Asp-248, Ser-258, Arg-259, and Asn-260. Catalysis depends on Lys-192, which acts as the Proton acceptor. Arg-259 is a binding site for NADPH. Residues Leu-283 and Glu-285 each contribute to the NADPH site.

Belongs to the NAD-dependent glycerol-3-phosphate dehydrogenase family.

It localises to the cytoplasm. The enzyme catalyses sn-glycerol 3-phosphate + NAD(+) = dihydroxyacetone phosphate + NADH + H(+). The catalysed reaction is sn-glycerol 3-phosphate + NADP(+) = dihydroxyacetone phosphate + NADPH + H(+). It participates in membrane lipid metabolism; glycerophospholipid metabolism. Its function is as follows. Catalyzes the reduction of the glycolytic intermediate dihydroxyacetone phosphate (DHAP) to sn-glycerol 3-phosphate (G3P), the key precursor for phospholipid synthesis. This Rickettsia typhi (strain ATCC VR-144 / Wilmington) protein is Glycerol-3-phosphate dehydrogenase [NAD(P)+].